We begin with the raw amino-acid sequence, 311 residues long: Eukaryotic translation initiation factor 3 subunit E (311 aa).

Residues 100–280 (VYYNYPKGRD…MGVKSVSIHE (181 aa)) enclose the PCI domain.

This sequence belongs to the eIF-3 subunit E family. As to quaternary structure, component of the eukaryotic translation initiation factor 3 (eIF-3) complex.

It is found in the cytoplasm. Its function is as follows. Component of the eukaryotic translation initiation factor 3 (eIF-3) complex, which is involved in protein synthesis of a specialized repertoire of mRNAs and, together with other initiation factors, stimulates binding of mRNA and methionyl-tRNAi to the 40S ribosome. The eIF-3 complex specifically targets and initiates translation of a subset of mRNAs involved in cell proliferation. The chain is Eukaryotic translation initiation factor 3 subunit E from Caenorhabditis briggsae.